Reading from the N-terminus, the 341-residue chain is uncharacterized protein (341 aa).

Residues 1–12 (NSRIAHVPKSKK) show a composition bias toward basic residues. Disordered regions lie at residues 1–21 (NSRI…SPRF) and 291–317 (KARM…NPED). A compositionally biased stretch (polar residues) spans 297–312 (SGKNYQQRPSRTTSPA).

This is an uncharacterized protein from Lachancea kluyveri (strain ATCC 58438 / CBS 3082 / BCRC 21498 / NBRC 1685 / JCM 7257 / NCYC 543 / NRRL Y-12651) (Yeast).